Here is a 293-residue protein sequence, read N- to C-terminus: Nucleotide-binding protein BCQ_4976 (293 aa).

14 to 21 is an ATP binding site; it reads GMSGAGKT. 65-68 is a binding site for GTP; the sequence is DLRG.

This sequence belongs to the RapZ-like family.

Its function is as follows. Displays ATPase and GTPase activities. In Bacillus cereus (strain Q1), this protein is Nucleotide-binding protein BCQ_4976.